The following is a 654-amino-acid chain: tRNA 5-methylaminomethyl-2-thiouridine biosynthesis bifunctional protein MnmC (654 aa).

The tract at residues 1–236 is tRNA (mnm(5)s(2)U34)-methyltransferase; it reads MTDRIVPATL…KRAMLVGEFA (236 aa). Residues 260 to 654 are FAD-dependent cmnm(5)s(2)U34 oxidoreductase; the sequence is IGAGLAGCAA…IRALRRGRVA (395 aa).

The protein in the N-terminal section; belongs to the methyltransferase superfamily. tRNA (mnm(5)s(2)U34)-methyltransferase family. In the C-terminal section; belongs to the DAO family. It depends on FAD as a cofactor.

Its subcellular location is the cytoplasm. It catalyses the reaction 5-aminomethyl-2-thiouridine(34) in tRNA + S-adenosyl-L-methionine = 5-methylaminomethyl-2-thiouridine(34) in tRNA + S-adenosyl-L-homocysteine + H(+). Functionally, catalyzes the last two steps in the biosynthesis of 5-methylaminomethyl-2-thiouridine (mnm(5)s(2)U) at the wobble position (U34) in tRNA. Catalyzes the FAD-dependent demodification of cmnm(5)s(2)U34 to nm(5)s(2)U34, followed by the transfer of a methyl group from S-adenosyl-L-methionine to nm(5)s(2)U34, to form mnm(5)s(2)U34. This chain is tRNA 5-methylaminomethyl-2-thiouridine biosynthesis bifunctional protein MnmC, found in Burkholderia thailandensis (strain ATCC 700388 / DSM 13276 / CCUG 48851 / CIP 106301 / E264).